A 466-amino-acid chain; its full sequence is Coagulation factor VII (466 aa).

A signal peptide spans methionine 1 to alanine 20. A propeptide spanning residues alanine 21–arginine 60 is cleaved from the precursor. The 45-residue stretch at alanine 61–serine 105 folds into the Gla domain. 4-carboxyglutamate occurs at positions 66, 67, 74, 76, 79, 80, 85, 86, 89, and 95. Cysteine 77 and cysteine 82 are disulfide-bonded. Residues aspartate 106–glutamate 142 form the EGF-like 1; calcium-binding domain. Disulfide bonds link cysteine 110-cysteine 121, cysteine 115-cysteine 130, cysteine 132-cysteine 141, cysteine 151-cysteine 162, cysteine 158-cysteine 172, cysteine 174-cysteine 187, cysteine 195-cysteine 322, cysteine 219-cysteine 224, cysteine 238-cysteine 254, and cysteine 370-cysteine 389. An O-linked (Glc...) serine; alternate glycan is attached at serine 112. Serine 112 carries an O-linked (Xyl...) serine; alternate glycan. O-linked (Fuc) serine glycosylation is present at serine 120. The residue at position 123 (aspartate 123) is a (3R)-3-hydroxyaspartate. The region spanning aspartate 147 to threonine 188 is the EGF-like 2 domain. N-linked (GlcNAc...) asparagine glycosylation occurs at asparagine 205. Residues isoleucine 213–arginine 452 form the Peptidase S1 domain. Catalysis depends on charge relay system residues histidine 253 and aspartate 302. N-linked (GlcNAc...) asparagine glycosylation is present at asparagine 382. Position 398 (aspartate 398) interacts with substrate. A disulfide bridge connects residues cysteine 400 and cysteine 428. Residue serine 404 is the Charge relay system of the active site.

It belongs to the peptidase S1 family. As to quaternary structure, heterodimer of a light chain and a heavy chain linked by a disulfide bond. The vitamin K-dependent, enzymatic carboxylation of some glutamate residues allows the modified protein to bind calcium. In terms of processing, the iron and 2-oxoglutarate dependent 3-hydroxylation of aspartate and asparagine is (R) stereospecific within EGF domains. Post-translationally, O-glycosylated. O-fucosylated by POFUT1 on a conserved serine or threonine residue found in the consensus sequence C2-X(4,5)-[S/T]-C3 of EGF domains, where C2 and C3 are the second and third conserved cysteines. Can be either O-glucosylated or O-xylosylated at Ser-112 by POGLUT1.

It is found in the secreted. The enzyme catalyses Selective cleavage of Arg-|-Ile bond in factor X to form factor Xa.. Functionally, initiates the extrinsic pathway of blood coagulation. Serine protease that circulates in the blood in a zymogen form. Factor VII is converted to factor VIIa by factor Xa, factor XIIa, factor IXa, or thrombin by minor proteolysis. In the presence of tissue factor and calcium ions, factor VIIa then converts factor X to factor Xa by limited proteolysis. Factor VIIa also converts factor IX to factor IXa in the presence of tissue factor and calcium. This Pan paniscus (Pygmy chimpanzee) protein is Coagulation factor VII (F7).